A 91-amino-acid polypeptide reads, in one-letter code: Small ribosomal subunit protein uS19 (91 aa).

The protein belongs to the universal ribosomal protein uS19 family.

Its function is as follows. Protein S19 forms a complex with S13 that binds strongly to the 16S ribosomal RNA. This Marinobacter nauticus (strain ATCC 700491 / DSM 11845 / VT8) (Marinobacter aquaeolei) protein is Small ribosomal subunit protein uS19.